We begin with the raw amino-acid sequence, 246 residues long: Adenosylcobinamide-GDP ribazoletransferase (246 aa).

The next 6 membrane-spanning stretches (helical) occupy residues 37–57 (FPAV…AGAL), 64–84 (ALAA…DGLA), 100–122 (LLAV…LQLL), 139–159 (ALVL…WWLM), 185–205 (LAAA…VLWW), and 223–243 (AGIE…GLWI).

It belongs to the CobS family. Requires Mg(2+) as cofactor.

The protein resides in the cell inner membrane. The enzyme catalyses alpha-ribazole + adenosylcob(III)inamide-GDP = adenosylcob(III)alamin + GMP + H(+). It catalyses the reaction alpha-ribazole 5'-phosphate + adenosylcob(III)inamide-GDP = adenosylcob(III)alamin 5'-phosphate + GMP + H(+). It participates in cofactor biosynthesis; adenosylcobalamin biosynthesis; adenosylcobalamin from cob(II)yrinate a,c-diamide: step 7/7. In terms of biological role, joins adenosylcobinamide-GDP and alpha-ribazole to generate adenosylcobalamin (Ado-cobalamin). Also synthesizes adenosylcobalamin 5'-phosphate from adenosylcobinamide-GDP and alpha-ribazole 5'-phosphate. This is Adenosylcobinamide-GDP ribazoletransferase from Novosphingobium aromaticivorans (strain ATCC 700278 / DSM 12444 / CCUG 56034 / CIP 105152 / NBRC 16084 / F199).